The primary structure comprises 355 residues: Neutral protease 2 homolog AFUB_100460 (355 aa).

The N-terminal stretch at 1-19 (MKITALASAILAVAQGALA) is a signal peptide. Residues 20–172 (LPARAPALDI…PASIKPLDRR (153 aa)) constitute a propeptide that is removed on maturation. Cystine bridges form between cysteine 179–cysteine 251 and cysteine 258–cysteine 276. Histidine 300 contributes to the Zn(2+) binding site. The active site involves glutamate 301. Zn(2+) contacts are provided by histidine 304 and aspartate 315.

Belongs to the peptidase M35 family. Requires Zn(2+) as cofactor.

Its subcellular location is the secreted. The enzyme catalyses Preferential cleavage of bonds with hydrophobic residues in P1'. Also 3-Asn-|-Gln-4 and 8-Gly-|-Ser-9 bonds in insulin B chain.. Functionally, secreted metalloproteinase that allows assimilation of proteinaceous substrates. Shows high activities on basic nuclear substrates such as histone and protamine. May be involved in virulence. This is Neutral protease 2 homolog AFUB_100460 from Aspergillus fumigatus (strain CBS 144.89 / FGSC A1163 / CEA10) (Neosartorya fumigata).